The primary structure comprises 630 residues: Chaperone protein HtpG (630 aa).

The segment at 1-327 (MSVETYKFDA…SEDLSLNISR (327 aa)) is a; substrate-binding. Residues 328–551 (ETLQHSPLID…EGSMDIRTER (224 aa)) form a b region. Residues 483-499 (TKTAKSSDTNNDGKDDT) are compositionally biased toward basic and acidic residues. Positions 483–504 (TKTAKSSDTNNDGKDDTSSSDD) are disordered. Positions 552–630 (FLIEQKQLSS…INFFIEKSVN (79 aa)) are c.

The protein belongs to the heat shock protein 90 family. In terms of assembly, homodimer.

The protein resides in the cytoplasm. Functionally, molecular chaperone. Has ATPase activity. The protein is Chaperone protein HtpG of Orientia tsutsugamushi (strain Boryong) (Rickettsia tsutsugamushi).